A 281-amino-acid polypeptide reads, in one-letter code: ATP phosphoribosyltransferase (281 aa).

This sequence belongs to the ATP phosphoribosyltransferase family. Long subfamily. As to quaternary structure, equilibrium between an active dimeric form, an inactive hexameric form and higher aggregates. Interconversion between the various forms is largely reversible and is influenced by the natural substrates and inhibitors of the enzyme. Mg(2+) serves as cofactor.

The protein localises to the cytoplasm. It carries out the reaction 1-(5-phospho-beta-D-ribosyl)-ATP + diphosphate = 5-phospho-alpha-D-ribose 1-diphosphate + ATP. It functions in the pathway amino-acid biosynthesis; L-histidine biosynthesis; L-histidine from 5-phospho-alpha-D-ribose 1-diphosphate: step 1/9. Feedback inhibited by histidine. Functionally, catalyzes the condensation of ATP and 5-phosphoribose 1-diphosphate to form N'-(5'-phosphoribosyl)-ATP (PR-ATP). Has a crucial role in the pathway because the rate of histidine biosynthesis seems to be controlled primarily by regulation of HisG enzymatic activity. The protein is ATP phosphoribosyltransferase of Mycolicibacterium gilvum (strain PYR-GCK) (Mycobacterium gilvum (strain PYR-GCK)).